The primary structure comprises 87 residues: Sec-independent protein translocase protein TatA (87 aa).

A helical membrane pass occupies residues Met-1 to Gly-21. The segment at Asn-54–Val-87 is disordered.

The protein belongs to the TatA/E family. As to quaternary structure, the Tat system comprises two distinct complexes: a TatABC complex, containing multiple copies of TatA, TatB and TatC subunits, and a separate TatA complex, containing only TatA subunits. Substrates initially bind to the TatABC complex, which probably triggers association of the separate TatA complex to form the active translocon.

Its subcellular location is the cell inner membrane. In terms of biological role, part of the twin-arginine translocation (Tat) system that transports large folded proteins containing a characteristic twin-arginine motif in their signal peptide across membranes. TatA could form the protein-conducting channel of the Tat system. The protein is Sec-independent protein translocase protein TatA of Photobacterium profundum (strain SS9).